Consider the following 364-residue polypeptide: Urease accessory protein UreD (364 aa).

2 disordered regions span residues 1–37 (MDQDRSGAADAGNPDPGRGPAGSAEARNGAAAASSPA) and 201–250 (PPEV…AGER). 3 stretches are compositionally biased toward low complexity: residues 21–37 (AGSAEARNGAAAASSPA), 209–218 (APDRGAPAAE), and 236–248 (AASSGGTGAAPAG).

This sequence belongs to the UreD family. In terms of assembly, ureD, UreF and UreG form a complex that acts as a GTP-hydrolysis-dependent molecular chaperone, activating the urease apoprotein by helping to assemble the nickel containing metallocenter of UreC. The UreE protein probably delivers the nickel.

It is found in the cytoplasm. In terms of biological role, required for maturation of urease via the functional incorporation of the urease nickel metallocenter. This is Urease accessory protein UreD from Kocuria rhizophila (strain ATCC 9341 / DSM 348 / NBRC 103217 / DC2201).